Here is a 258-residue protein sequence, read N- to C-terminus: Indole-3-glycerol phosphate synthase (258 aa).

It belongs to the TrpC family.

It carries out the reaction 1-(2-carboxyphenylamino)-1-deoxy-D-ribulose 5-phosphate + H(+) = (1S,2R)-1-C-(indol-3-yl)glycerol 3-phosphate + CO2 + H2O. Its pathway is amino-acid biosynthesis; L-tryptophan biosynthesis; L-tryptophan from chorismate: step 4/5. The polypeptide is Indole-3-glycerol phosphate synthase (Campylobacter jejuni subsp. doylei (strain ATCC BAA-1458 / RM4099 / 269.97)).